Consider the following 506-residue polypeptide: Maturase K (506 aa).

Belongs to the intron maturase 2 family. MatK subfamily.

The protein localises to the plastid. Its subcellular location is the chloroplast. In terms of biological role, usually encoded in the trnK tRNA gene intron. Probably assists in splicing its own and other chloroplast group II introns. This Mentzelia lindleyi (Blazing star) protein is Maturase K.